The following is a 307-amino-acid chain: Serine/threonine-protein phosphatase 4 catalytic subunit (307 aa).

A2 is modified (N-acetylalanine). The Mn(2+) site is built by D54, H56, D82, and N114. H115 (proton donor) is an active-site residue. 2 residues coordinate Mn(2+): H164 and H238. Residue L307 is modified to Leucine methyl ester.

It belongs to the PPP phosphatase family. PP-4 (PP-X) subfamily. As to quaternary structure, serine/threonine-protein phosphatase 4 (PP4) occurs in different assemblies of the catalytic and one or more regulatory subunits. Component of the PP4 complexes PPP4C-PPP4R1, PPP4C-PPP4R2, PPP4C-PPP4R2-PPP4R3A, PPP4C-PPP4R2-PPP4R3B and PPP4C-PPP4R4. The PPP4C-PPP4R2 complex appears to be a tetramer composed of 2 molecules of PPP4C and 2 molecules of PPP4R2. Interacts with REL, NFKB1/p50 and RELA. Interacts with SMN1 and GEMIN4. Interacts with IRS4 (phosphorylated). Interacts with SMEK1/PPP4R3A; the interaction requires PP4R2. Interacts with HDAC3. Requires Mn(2+) as cofactor. In terms of processing, methylation at the C-terminal Leu-307 is critical for interactions with regulatory subunits and functions in DNA repair.

The protein localises to the cytoplasm. The protein resides in the nucleus. It is found in the cytoskeleton. Its subcellular location is the microtubule organizing center. It localises to the centrosome. It carries out the reaction O-phospho-L-seryl-[protein] + H2O = L-seryl-[protein] + phosphate. The enzyme catalyses O-phospho-L-threonyl-[protein] + H2O = L-threonyl-[protein] + phosphate. Its function is as follows. Protein phosphatase that is involved in many processes such as microtubule organization at centrosomes, maturation of spliceosomal snRNPs, apoptosis, DNA repair, tumor necrosis factor (TNF)-alpha signaling, activation of c-Jun N-terminal kinase MAPK8, regulation of histone acetylation, DNA damage checkpoint signaling, NF-kappa-B activation and cell migration. The PPP4C-PPP4R1 PP4 complex may play a role in dephosphorylation and regulation of HDAC3. The PPP4C-PPP4R2-PPP4R3A PP4 complex specifically dephosphorylates H2AX phosphorylated on Ser-140 (gamma-H2AX) generated during DNA replication and required for DNA DSB repair. Dephosphorylates NDEL1 at CDK1 phosphorylation sites and negatively regulates CDK1 activity in interphase. In response to DNA damage, catalyzes RPA2 dephosphorylation, an essential step for DNA repair since it allows the efficient RPA2-mediated recruitment of RAD51 to chromatin. The protein is Serine/threonine-protein phosphatase 4 catalytic subunit (Ppp4c) of Rattus norvegicus (Rat).